Reading from the N-terminus, the 194-residue chain is Inner membrane-spanning protein YciB (194 aa).

The next 5 membrane-spanning stretches (helical) occupy residues 3–23 (LFIE…AGIY), 47–67 (IPAK…LTIY), 76–96 (WKVT…NTFF), 119–139 (LNLA…YIAF), and 149–169 (FKVF…ILFL).

This sequence belongs to the YciB family.

The protein resides in the cell inner membrane. Functionally, plays a role in cell envelope biogenesis, maintenance of cell envelope integrity and membrane homeostasis. The chain is Inner membrane-spanning protein YciB from Colwellia psychrerythraea (strain 34H / ATCC BAA-681) (Vibrio psychroerythus).